The following is a 264-amino-acid chain: 3-methyl-2-oxobutanoate hydroxymethyltransferase 2 (264 aa).

Mg(2+) contacts are provided by D44 and D83. 3-methyl-2-oxobutanoate is bound by residues 44 to 45, D83, and K111; that span reads DS. Mg(2+) is bound at residue E113. Catalysis depends on E180, which acts as the Proton acceptor.

This sequence belongs to the PanB family. In terms of assembly, homodecamer; pentamer of dimers. Mg(2+) is required as a cofactor.

The protein resides in the cytoplasm. It carries out the reaction 3-methyl-2-oxobutanoate + (6R)-5,10-methylene-5,6,7,8-tetrahydrofolate + H2O = 2-dehydropantoate + (6S)-5,6,7,8-tetrahydrofolate. It participates in cofactor biosynthesis; (R)-pantothenate biosynthesis; (R)-pantoate from 3-methyl-2-oxobutanoate: step 1/2. Catalyzes the reversible reaction in which hydroxymethyl group from 5,10-methylenetetrahydrofolate is transferred onto alpha-ketoisovalerate to form ketopantoate. The protein is 3-methyl-2-oxobutanoate hydroxymethyltransferase 2 of Hahella chejuensis (strain KCTC 2396).